The sequence spans 622 residues: Cilia- and flagella-associated protein 206 (622 aa).

Residues 568 to 593 form a disordered region; it reads NTSQVYPLKEASTQSKREGSSRVPRP.

This sequence belongs to the CFAP206 family. Expressed in the sperm, oviduct, lung, nasal cavity, brain ependyma and choroid plexus.

It localises to the cytoplasm. The protein resides in the cytoskeleton. The protein localises to the cilium axoneme. It is found in the cilium basal body. Functionally, essential for sperm motility and is involved in the regulation of the beating frequency of motile cilia on the epithelial cells of the respiratory tract. Required for the establishment of radial spokes in sperm flagella. This chain is Cilia- and flagella-associated protein 206, found in Mus musculus (Mouse).